The primary structure comprises 222 residues: uncharacterized protein (222 aa).

Transmembrane regions (helical) follow at residues 25-45 (LLWL…PATA), 80-100 (LLGA…ALIY), 111-131 (FAIM…FPLL), and 160-180 (LALT…VPFF).

It is found in the cell membrane. This is an uncharacterized protein from Bacillus subtilis (strain 168).